A 95-amino-acid polypeptide reads, in one-letter code: Small ribosomal subunit protein bS6 (95 aa).

Belongs to the bacterial ribosomal protein bS6 family.

In terms of biological role, binds together with bS18 to 16S ribosomal RNA. This Clostridium kluyveri (strain NBRC 12016) protein is Small ribosomal subunit protein bS6.